Reading from the N-terminus, the 408-residue chain is Dual-specificity RNA methyltransferase RlmN (408 aa).

Catalysis depends on Glu-120, which acts as the Proton acceptor. In terms of domain architecture, Radical SAM core spans 126–375 (EEGRGTLCIS…IRTPRGRDIL (250 aa)). An intrachain disulfide couples Cys-133 to Cys-378. [4Fe-4S] cluster is bound by residues Cys-140, Cys-144, and Cys-147. Residues 204–205 (GE), Ser-236, 258–260 (SLH), and Asn-335 contribute to the S-adenosyl-L-methionine site. Cys-378 functions as the S-methylcysteine intermediate in the catalytic mechanism.

Belongs to the radical SAM superfamily. RlmN family. It depends on [4Fe-4S] cluster as a cofactor.

The protein resides in the cytoplasm. The enzyme catalyses adenosine(2503) in 23S rRNA + 2 reduced [2Fe-2S]-[ferredoxin] + 2 S-adenosyl-L-methionine = 2-methyladenosine(2503) in 23S rRNA + 5'-deoxyadenosine + L-methionine + 2 oxidized [2Fe-2S]-[ferredoxin] + S-adenosyl-L-homocysteine. It catalyses the reaction adenosine(37) in tRNA + 2 reduced [2Fe-2S]-[ferredoxin] + 2 S-adenosyl-L-methionine = 2-methyladenosine(37) in tRNA + 5'-deoxyadenosine + L-methionine + 2 oxidized [2Fe-2S]-[ferredoxin] + S-adenosyl-L-homocysteine. Specifically methylates position 2 of adenine 2503 in 23S rRNA and position 2 of adenine 37 in tRNAs. m2A2503 modification seems to play a crucial role in the proofreading step occurring at the peptidyl transferase center and thus would serve to optimize ribosomal fidelity. In Rhizobium leguminosarum bv. trifolii (strain WSM2304), this protein is Dual-specificity RNA methyltransferase RlmN.